Reading from the N-terminus, the 369-residue chain is Lipoyl synthase, mitochondrial (369 aa).

A mitochondrion-targeting transit peptide spans 1–32 (MLTKGVRALAWSPRRYITLDAEAAKPVVAKRR). Positions 106, 111, 117, 136, 140, 143, and 351 each coordinate [4Fe-4S] cluster. Positions 121-340 (NKGSATATIM…KEKALELGFL (220 aa)) constitute a Radical SAM core domain.

The protein belongs to the radical SAM superfamily. Lipoyl synthase family. The cofactor is [4Fe-4S] cluster.

It is found in the mitochondrion. It catalyses the reaction [[Fe-S] cluster scaffold protein carrying a second [4Fe-4S](2+) cluster] + N(6)-octanoyl-L-lysyl-[protein] + 2 oxidized [2Fe-2S]-[ferredoxin] + 2 S-adenosyl-L-methionine + 4 H(+) = [[Fe-S] cluster scaffold protein] + N(6)-[(R)-dihydrolipoyl]-L-lysyl-[protein] + 4 Fe(3+) + 2 hydrogen sulfide + 2 5'-deoxyadenosine + 2 L-methionine + 2 reduced [2Fe-2S]-[ferredoxin]. Its pathway is protein modification; protein lipoylation via endogenous pathway; protein N(6)-(lipoyl)lysine from octanoyl-[acyl-carrier-protein]: step 2/2. Catalyzes the radical-mediated insertion of two sulfur atoms into the C-6 and C-8 positions of the octanoyl moiety bound to the lipoyl domains of lipoate-dependent enzymes, thereby converting the octanoylated domains into lipoylated derivatives. The protein is Lipoyl synthase, mitochondrial of Eremothecium gossypii (strain ATCC 10895 / CBS 109.51 / FGSC 9923 / NRRL Y-1056) (Yeast).